The sequence spans 834 residues: Ras GTPase-activating protein 3 (834 aa).

2 C2 domains span residues 1 to 112 (MAVE…DTWF) and 123 to 263 (VQGK…EAWY). A2 is subject to N-acetylalanine. Residue Y66 is modified to Phosphotyrosine. S77 is modified (phosphoserine). Position 110 is a phosphothreonine (T110). One can recognise a Ras-GAP domain in the interval 346 to 561 (GRVVPFISAI…DAVKNFLDLI (216 aa)). The PH domain maps to 576–677 (ILLKEGFMIK…WIDILTKVSQ (102 aa)). Residues 679–715 (NQKRLTVFHPSAYLNGHWLCCRASSDTAAGCTPCTGG) form a Btk-type zinc finger. Zn(2+) contacts are provided by H687, C698, C699, and C709. Residues S809 and S833 each carry the phosphoserine modification.

In terms of tissue distribution, high levels in brain, lower in spleen and lung.

Inhibitory regulator of the Ras-cyclic AMP pathway. May bind inositol tetrakisphosphate (IP4). This chain is Ras GTPase-activating protein 3 (Rasa3), found in Mus musculus (Mouse).